A 363-amino-acid polypeptide reads, in one-letter code: Pulmonary surfactant-associated protein B (363 aa).

The signal sequence occupies residues 1–16; it reads LLWLLLLPTLCGLGAA. A propeptide spanning residues 17-180 is cleaved from the precursor; it reads DWSAPSLACA…PHTQDLSEQQ (164 aa). The 41-residue stretch at 18–58 folds into the Saposin A-type domain; the sequence is WSAPSLACARGPAFWCQSLEQALQCRALGHCLQEVWGNARA. Saposin B-type domains follow at residues 58 to 140, 184 to 261, and 277 to 352; these read ADDL…KPGL, PLPY…SHED, and QESK…RTTF. Cystine bridges form between Cys62/Cys136, Cys65/Cys130, Cys93/Cys105, Cys188/Cys257, Cys191/Cys251, Cys215/Cys226, Cys281/Cys348, Cys284/Cys342, and Cys307/Cys317. Positions 260–363 are excised as a propeptide; it reads EDSAGPALAS…PLQCIHIPHF (104 aa). Asn293 is a glycosylation site (N-linked (GlcNAc...) asparagine).

Homodimer; disulfide-linked.

The protein localises to the secreted. Its subcellular location is the extracellular space. It localises to the surface film. Functionally, pulmonary surfactant-associated proteins promote alveolar stability by lowering the surface tension at the air-liquid interface in the peripheral air spaces. SP-B increases the collapse pressure of palmitic acid to nearly 70 millinewtons per meter. The polypeptide is Pulmonary surfactant-associated protein B (SFTPB) (Canis lupus familiaris (Dog)).